A 370-amino-acid chain; its full sequence is 4-hydroxy-3-methylbut-2-en-1-yl diphosphate synthase (flavodoxin) (370 aa).

[4Fe-4S] cluster is bound by residues C270, C273, C305, and E312.

Belongs to the IspG family. [4Fe-4S] cluster serves as cofactor.

The enzyme catalyses (2E)-4-hydroxy-3-methylbut-2-enyl diphosphate + oxidized [flavodoxin] + H2O + 2 H(+) = 2-C-methyl-D-erythritol 2,4-cyclic diphosphate + reduced [flavodoxin]. It participates in isoprenoid biosynthesis; isopentenyl diphosphate biosynthesis via DXP pathway; isopentenyl diphosphate from 1-deoxy-D-xylulose 5-phosphate: step 5/6. Its function is as follows. Converts 2C-methyl-D-erythritol 2,4-cyclodiphosphate (ME-2,4cPP) into 1-hydroxy-2-methyl-2-(E)-butenyl 4-diphosphate. The protein is 4-hydroxy-3-methylbut-2-en-1-yl diphosphate synthase (flavodoxin) of Hamiltonella defensa subsp. Acyrthosiphon pisum (strain 5AT).